A 233-amino-acid polypeptide reads, in one-letter code: 2-phytyl-1,4-naphtoquinone methyltransferase (233 aa).

It belongs to the class I-like SAM-binding methyltransferase superfamily. MenG/UbiE family.

The enzyme catalyses demethylphylloquinol + S-adenosyl-L-methionine = phylloquinol + S-adenosyl-L-homocysteine + H(+). The protein operates within cofactor biosynthesis; phylloquinone biosynthesis. Functionally, methyltransferase required for the conversion of 2-phytyl-1,4-beta-naphthoquinol to phylloquinol. The polypeptide is 2-phytyl-1,4-naphtoquinone methyltransferase (Synechococcus elongatus (strain ATCC 33912 / PCC 7942 / FACHB-805) (Anacystis nidulans R2)).